The sequence spans 2273 residues: KGKTITHGQSWGARRIHSHFYITIFTITCIRIGQYKLALYLDPYRFYNITGSQIVRLKGQRPEYRKRIFAHSYRHSSRIGLNFPSRRRYSNYVDRGNIHKHTRLPPQFIGLNTVESAQPSILRDFVDLRGGHTVISKILIANNGIAAVKEMRSIRKWAYETFNDEKIIQFVVMATPDDLHANSEYIRMADQYVQVPGGTNNNNYANIDLILDVAEQTDVDAVWAGWGHASENPCLPELLASSQRKILFIGPPGRAMRSLGDKISSTIVAQSAKIPCIPWSGSHIDTIHIDNKTNFVSVPDDVYVRGCCSSPEDALEKAKLIGFPVMIKASEGGGGKGIRRVDNQDDFIALYRQAVNETPGSPMFVMKVVTDARHLEVQLLADQYGTNITLFGRDCSIQRRHQKIIEEAPVTITKPETFQRMERAAIRLGELVGYVSAGTVEYLYSPKDDKFYFLELNPRLQVEHPTTEMISGVNLPATQLQIAMGIPMHMISDIRKLYGLDPTGTSYIDFKNLKRPSPKGHCISCRITSEDPNEGFKPSTGKIHELNFRSSSNVWGYFSVGNNGAIHSFSDSQFGHIFAVGNDRQDAKQNMVLALKDFSIRGEFKTPIEYLTELLETRDFESNNISTGWLDDLILKNLSSDSKLDPTLAIICGAAMKAYVFTEKVRNKYLELLRRGQVPPKDFLKTKFPVDFIFDNNKYLFNVAQSSEEQFILSINKSQCEVNVQKLSSDCLLISVDGKCHTVYWKDDIRGTRLSIDSNTIFLEAELNPTQVISPTPGKLVKYLVRSGDHVFAGQQYAEIEIMKMQMPLVAKSDGVIELLRQPGSIIEAGDVIAKLTLDSPSKANESSLYRGELPVLGPPLIEGSRPNHKLRVLINRLENILNGYHENSGIETTLKELIKILRDGRLPYSEWDSQISTVRNRLPRQLNEGLGNLVKKSVSFPAKELHKLMKRYLEENTNDHVVYVALQPLLKISERYSEGLANHECEIFLKLIKKYYAVEKIFENHDIHEERNLLNLRRKDLTNLKEILCISLSHANIVAKNKLVTAILHEYEPLCQDSSKMSLKFRAVIHDLASLESKWAKEVAVKARSVLLRGIFPPIKKRKEHIKTLLQLHIKDTGAENIHSRNIYSCMRDFGNLIHSNLIQLQDLFFFFGHQDTALSSIASEIYARYAYGNYQLKSIKIHKGAPDLLMSWQFSSLRNYLVNPDGESDGFTKLSKPPSTSGKSSANSFGLLVNMRALESLEKTLDEVYEQIHIPEERLSSGENSLIVNILSPIRYRSENDLIKTLKIKLHENERGLSKLKVNRITFAFIAANAPAVKFYSFDGTTYDEIPQIRNMDPSYEAPLELGKMSNYKIRSLPTYDSSIRIFEGISKFTPLDKRFFVRKIINSFMYNDQKTTEENLKAEINAQVVYMLEHLGAVDISNSDLNHIFLSFNTVLNIPVHRLEEIVSTILKTHETRLFQERITDVEICISVECLETKKPAPLRLLISNKSGYVVKIETYYEKIGKNGNLILEPCSEQSHYSQKSLSLPYSVKDWLQPKRYKAQFMGTTYVYDFPGLFHQAAIQQWKRYFPKHKLNDSFFSWVELIEQNGNLIKVNREPGLNNIGMVAFEIMVQTPEYPEGRNMIVISNDITYNIGSFGPREDLFFDRVTNYARERGIPRIYLAANSGAKLGIAEELIPLFRVAWNDPSDPTKGFQYLYLAPKDMQLLKDSGKGNSVVVEHKMVYGEERYIIKAIVGFEEGLGVECLQGSGLIAGATSKAYREIFTITAVTCRSVGIGSYLVRLGQRTIQVEDKPIILTGASAINKVLGTDIYISNLQIGGTQIMYKNGIAHLTASNDMKAIEKIMTWLSYVPAKRDMSPPLLETMDRWDRDVDFKPAKQVPYEARWLIEGKWDSNNNFQSGLFDKDSFFETLSGWAKGVIVGRARLGGIPVGVIAVETKTIEEIIPADPANLDSSEFSVKEAGQVWYPNSAFKTAQTINDFNYGEQLPLIILANWRGFSGGQRDMYNEVLKYGSFIVDALVDYKQPILIYIPPFGELRGGSWVVIDPTINPEQMEMYADVESRGGVLEPDGVVSIKYRKEKMIETMIRLDSTYGHLRRTLTEKKLSLEKQNDLTKRLKIRERQLIPIYNQISIQFADLHDRSTRMLVKGVIRNELEWKKSRRFLYWRLRRRLNEGQVIKRLQKKTCDNKTKMKYDDLLKIVQSWYNDLDVNDDRAVVEFIERNSKKIDKNIEEFEISLLIDELKKKFEDRRGNIVLEELTRLVDSKRKR.

The transit peptide at 1–104 (KGKTITHGQS…RGNIHKHTRL (104 aa)) directs the protein to the mitochondrion. Residues 134–635 (VISKILIANN…STGWLDDLIL (502 aa)) enclose the Biotin carboxylation domain. An ATP-grasp domain is found at 292–484 (KTNFVSVPDD…LPATQLQIAM (193 aa)). Residue 332–337 (GGGGKG) coordinates ATP. Arg-459 is an active-site residue. The Biotinyl-binding domain occupies 763–837 (LEAELNPTQV…EAGDVIAKLT (75 aa)). Position 804 is an N6-biotinyllysine (Lys-804). The CoA carboxyltransferase N-terminal domain occupies 1532-1867 (PYSVKDWLQP…KRDMSPPLLE (336 aa)). Positions 1532-2187 (PYSVKDWLQP…EGQVIKRLQK (656 aa)) are carboxyltransferase. Residues Arg-1776, Lys-2080, and Arg-2082 each contribute to the CoA site. Positions 1871-2187 (RWDRDVDFKP…EGQVIKRLQK (317 aa)) constitute a CoA carboxyltransferase C-terminal domain.

Requires biotin as cofactor.

The protein localises to the mitochondrion. The catalysed reaction is hydrogencarbonate + acetyl-CoA + ATP = malonyl-CoA + ADP + phosphate + H(+). The enzyme catalyses N(6)-biotinyl-L-lysyl-[protein] + hydrogencarbonate + ATP = N(6)-carboxybiotinyl-L-lysyl-[protein] + ADP + phosphate + H(+). Its pathway is lipid metabolism; malonyl-CoA biosynthesis; malonyl-CoA from acetyl-CoA: step 1/1. Catalyzes the rate-limiting reaction in the mitochondrial fatty acid synthesis (FAS) type II pathway. Responsible for the production of the mitochondrial malonyl-CoA, used for the biosynthesis of the cofactor lipoic acid. This protein carries three functions: biotin carboxyl carrier protein, biotin carboxylase, and carboxyltransferase. The protein is Acetyl-CoA carboxylase, mitochondrial (HFA1) of Saccharomyces cerevisiae (strain RM11-1a) (Baker's yeast).